Reading from the N-terminus, the 317-residue chain is Prenyl transferase paxC (317 aa).

Substrate is bound by residues K53 and H86. D93 and D97 together coordinate Mg(2+). Substrate contacts are provided by R102, K186, T187, Q216, N223, and K233.

Belongs to the FPP/GGPP synthase family.

It functions in the pathway secondary metabolite biosynthesis. Functionally, prenyl transferase; part of the gene cluster that mediates the biosynthesis of paxalline, a mycotoxin that acts as an inhibitor of mammalian maxi-K channels. PaxG, the geranylgeranyl diphosphate (GGPP) synthase is proposed to catalyze the first step in paxilline biosynthesis. Condensation of indole-3-glycerol phosphate with GGPP by paxC then forms 3-geranylgeranylindole (3-GGI), followed by epoxidation and cyclization of this intermediate (by paxM and paxB) to form paspaline. Paspaline is subsequently converted to 13-desoxypaxilline by paxP, the latter being then converted to paxilline by paxQ. Finally paxilline can be mono- and di-prenylated by paxD. The protein is Prenyl transferase paxC of Penicillium paxilli.